Consider the following 136-residue polypeptide: Large ribosomal subunit protein uL16 (136 aa).

The protein belongs to the universal ribosomal protein uL16 family. As to quaternary structure, part of the 50S ribosomal subunit.

Binds 23S rRNA and is also seen to make contacts with the A and possibly P site tRNAs. This Pasteurella multocida (strain Pm70) protein is Large ribosomal subunit protein uL16.